Reading from the N-terminus, the 430-residue chain is Serine--tRNA ligase (430 aa).

An L-serine-binding site is contributed by 236–238 (TAE). Residue 267 to 269 (RSE) participates in ATP binding. Glutamate 290 serves as a coordination point for L-serine. 354 to 357 (EISS) contributes to the ATP binding site. Serine 390 contacts L-serine.

The protein belongs to the class-II aminoacyl-tRNA synthetase family. Type-1 seryl-tRNA synthetase subfamily. In terms of assembly, homodimer. The tRNA molecule binds across the dimer.

The protein resides in the cytoplasm. It carries out the reaction tRNA(Ser) + L-serine + ATP = L-seryl-tRNA(Ser) + AMP + diphosphate + H(+). The catalysed reaction is tRNA(Sec) + L-serine + ATP = L-seryl-tRNA(Sec) + AMP + diphosphate + H(+). The protein operates within aminoacyl-tRNA biosynthesis; selenocysteinyl-tRNA(Sec) biosynthesis; L-seryl-tRNA(Sec) from L-serine and tRNA(Sec): step 1/1. In terms of biological role, catalyzes the attachment of serine to tRNA(Ser). Is also able to aminoacylate tRNA(Sec) with serine, to form the misacylated tRNA L-seryl-tRNA(Sec), which will be further converted into selenocysteinyl-tRNA(Sec). The chain is Serine--tRNA ligase from Mannheimia succiniciproducens (strain KCTC 0769BP / MBEL55E).